The primary structure comprises 504 residues: Anaerobic nitric oxide reductase transcription regulator NorR (504 aa).

Position 57 is a 4-aspartylphosphate (aspartate 57). One can recognise a Sigma-54 factor interaction domain in the interval 187-416; sequence MIGLSPGMTQ…LEHAIHRAVV (230 aa). Residues 215 to 222 and 278 to 287 each bind ATP; these read GETGTGKE and ADNGTLFLDE. Residues 479-498 constitute a DNA-binding region (H-T-H motif); the sequence is WAACARMLETDVANLHRLAK.

It participates in nitrogen metabolism; nitric oxide reduction. Functionally, required for the expression of anaerobic nitric oxide (NO) reductase, acts as a transcriptional activator for at least the norVW operon. Activation also requires sigma-54. The polypeptide is Anaerobic nitric oxide reductase transcription regulator NorR (Shigella boydii serotype 4 (strain Sb227)).